A 351-amino-acid chain; its full sequence is Cell cycle control protein 50B (351 aa).

Residues 1-33 (MTWSATARGAHQPDNTAFTQQRLPAWQPLLSAS) are Cytoplasmic-facing. The helical transmembrane segment at 34–54 (IALPLFFCAGLAFIGLGLGLY) threads the bilayer. Residues 55–315 (YSSNGIKELE…SISWMGGKNP (261 aa)) are Exoplasmic loop-facing. N-linked (GlcNAc...) asparagine glycans are attached at residues N75, N213, and N286. Residues 316-336 (FLGIAYLVVGSLCILTGFVML) traverse the membrane as a helical segment. Residues 337–351 (VVYIRYQDQDDDDEE) are Cytoplasmic-facing.

The protein belongs to the CDC50/LEM3 family. Component of a P4-ATPase flippase complex which consists of a catalytic alpha subunit and an accessory beta subunit. Interacts with alpha subunits ATP8A1, ATP8B1, ATP8B2 and ATP8B4.

The protein localises to the cell membrane. Accessory component of a P4-ATPase flippase complex which catalyzes the hydrolysis of ATP coupled to the transport of aminophospholipids from the outer to the inner leaflet of various membranes and ensures the maintenance of asymmetric distribution of phospholipids. Phospholipid translocation also seems to be implicated in vesicle formation and in uptake of lipid signaling molecules. The beta subunit may assist in binding of the phospholipid substrate. Can mediate the export of alpha subunits ATP8A1, ATP8B1, ATP8B2 and ATP8B4 from the ER to the plasma membrane. The protein is Cell cycle control protein 50B (TMEM30B) of Homo sapiens (Human).